A 684-amino-acid chain; its full sequence is ATP-dependent zinc metalloprotease FtsH (684 aa).

Residues 1–21 (MENKNDMFNKTPKSGKPKMFR) are Cytoplasmic-facing. The chain crosses the membrane as a helical span at residues 22–42 (FNLYWMYGLIFIMLVALYMTN). Residues 43 to 138 (DSSGTKELGW…QVRFEEGDDA (96 aa)) lie on the Periplasmic side of the membrane. A helical transmembrane segment spans residues 139–159 (IWNFLVSFGPIILLIGVWMFL). Residues 160–684 (MRRMSGGTGA…TEENKTGKIA (525 aa)) lie on the Cytoplasmic side of the membrane. Residue 236–243 (GPPGTGKT) participates in ATP binding. His459 contributes to the Zn(2+) binding site. The active site involves Glu460. Positions 463 and 534 each coordinate Zn(2+). The segment covering 647–662 (EKANGKNKENADKEAE) has biased composition (basic and acidic residues). The segment at 647 to 684 (EKANGKNKENADKEAEADATTENVTDTPTEENKTGKIA) is disordered.

The protein in the central section; belongs to the AAA ATPase family. In the C-terminal section; belongs to the peptidase M41 family. In terms of assembly, homohexamer. It depends on Zn(2+) as a cofactor.

It localises to the cell inner membrane. Acts as a processive, ATP-dependent zinc metallopeptidase for both cytoplasmic and membrane proteins. Plays a role in the quality control of integral membrane proteins. In Parabacteroides distasonis (strain ATCC 8503 / DSM 20701 / CIP 104284 / JCM 5825 / NCTC 11152), this protein is ATP-dependent zinc metalloprotease FtsH.